The following is a 123-amino-acid chain: Small ribosomal subunit protein uS12 (123 aa).

Positions 1 to 31 (MPTINQLIRKPREAQKARDKAPALQASPQKR) are disordered. The segment covering 10–21 (KPREAQKARDKA) has biased composition (basic and acidic residues). D89 carries the 3-methylthioaspartic acid modification.

Belongs to the universal ribosomal protein uS12 family. As to quaternary structure, part of the 30S ribosomal subunit. Contacts proteins S8 and S17. May interact with IF1 in the 30S initiation complex.

Functionally, with S4 and S5 plays an important role in translational accuracy. Its function is as follows. Interacts with and stabilizes bases of the 16S rRNA that are involved in tRNA selection in the A site and with the mRNA backbone. Located at the interface of the 30S and 50S subunits, it traverses the body of the 30S subunit contacting proteins on the other side and probably holding the rRNA structure together. The combined cluster of proteins S8, S12 and S17 appears to hold together the shoulder and platform of the 30S subunit. The chain is Small ribosomal subunit protein uS12 from Xanthobacter autotrophicus (strain ATCC BAA-1158 / Py2).